The primary structure comprises 496 residues: Lysine--tRNA ligase (496 aa).

Glutamate 408 and glutamate 415 together coordinate Mg(2+).

This sequence belongs to the class-II aminoacyl-tRNA synthetase family. Homodimer. It depends on Mg(2+) as a cofactor.

The protein localises to the cytoplasm. It carries out the reaction tRNA(Lys) + L-lysine + ATP = L-lysyl-tRNA(Lys) + AMP + diphosphate. This Legionella pneumophila (strain Paris) protein is Lysine--tRNA ligase.